Reading from the N-terminus, the 127-residue chain is Probable 4-amino-4-deoxy-L-arabinose-phosphoundecaprenol flippase subunit ArnF (127 aa).

At 1 to 2 (MG) the chain is on the cytoplasmic side. The chain crosses the membrane as a helical span at residues 3-23 (LLFALGSVVLVSAAQLLLKWA). Over 24–47 (MIQLPDISQLPQFLSSLSQFPLPT) the chain is Periplasmic. Residues 48–68 (AALFLGLLAYALSMLCWLLAL) form a helical membrane-spanning segment. Residues 69–76 (KRLPLSRA) are Cytoplasmic-facing. A helical transmembrane segment spans residues 77–97 (YPLLSLSYLLVWLAALWLPGL). The Periplasmic portion of the chain corresponds to 98–102 (NEVFR). Residues 103–123 (WGKLAGAGLIVSGLLLICWPA) traverse the membrane as a helical segment. Residues 124–127 (AKTR) lie on the Cytoplasmic side of the membrane.

It belongs to the ArnF family. In terms of assembly, heterodimer of ArnE and ArnF.

Its subcellular location is the cell inner membrane. Its pathway is bacterial outer membrane biogenesis; lipopolysaccharide biosynthesis. Functionally, translocates 4-amino-4-deoxy-L-arabinose-phosphoundecaprenol (alpha-L-Ara4N-phosphoundecaprenol) from the cytoplasmic to the periplasmic side of the inner membrane. The protein is Probable 4-amino-4-deoxy-L-arabinose-phosphoundecaprenol flippase subunit ArnF of Erwinia tasmaniensis (strain DSM 17950 / CFBP 7177 / CIP 109463 / NCPPB 4357 / Et1/99).